The following is a 205-amino-acid chain: Protein phosphatase inhibitor 2 (205 aa).

2 disordered regions span residues M1–K46 and G64–S205. At A2 the chain carries N-acetylalanine. Required for binding PPP1CC stretches follow at residues K12–N17 and K43–T55. A compositionally biased stretch (polar residues) spans N17 to V26. Residues S35 to K46 show a composition bias toward basic and acidic residues. S44 is modified (phosphoserine; by ATM). A Phosphothreonine; by GSK3 modification is found at T73. A compositionally biased stretch (acidic residues) spans G80–T91. Residue S87 is modified to Phosphoserine. T89, T92, and T96 each carry phosphothreonine. Residues S110 to E120 show a composition bias toward basic and acidic residues. S121, S122, S127, and S130 each carry phosphoserine. Residues S121–S130 are compositionally biased toward acidic residues. Residues P131–K143 show a composition bias toward basic and acidic residues. A required for binding PPP1CC catalytic center, displacing metal ions and inhibition of PPP1CC catalytic activity region spans residues H147 to E150. The segment covering D167–D179 has biased composition (acidic residues). Polar residues predominate over residues S182–S205.

Belongs to the protein phosphatase inhibitor 2 family. In terms of assembly, heterodimer with PP1. Phosphorylation on Ser-44 by ATM activates PP1 by dissociating the PP1-PPP1R2 complex. Phosphorylation on Thr-73 by GSK3 activates PP1 by dissociating the PP1-PPP1R2 complex.

Functionally, inhibitor of protein-phosphatase 1. This Oryctolagus cuniculus (Rabbit) protein is Protein phosphatase inhibitor 2 (PPP1R2).